Reading from the N-terminus, the 768-residue chain is UPF0313 protein VV1_2212 (768 aa).

Residues 363–640 (AYDMIKTSVN…LHKALLRYHD (278 aa)) enclose the Radical SAM core domain. [4Fe-4S] cluster contacts are provided by Cys-377, Cys-381, and Cys-384. The interval 674-768 (DARTPAQRRK…GGRNQPSRAR (95 aa)) is disordered. Positions 679 to 689 (AQRRKSGRHGA) are enriched in basic residues. Positions 719-731 (GGQSNSAPSRSGS) are enriched in polar residues.

It belongs to the UPF0313 family. [4Fe-4S] cluster serves as cofactor.

This chain is UPF0313 protein VV1_2212, found in Vibrio vulnificus (strain CMCP6).